A 58-amino-acid polypeptide reads, in one-letter code: Large ribosomal subunit protein uL30 (58 aa).

This sequence belongs to the universal ribosomal protein uL30 family. Part of the 50S ribosomal subunit.

This chain is Large ribosomal subunit protein uL30, found in Trichlorobacter lovleyi (strain ATCC BAA-1151 / DSM 17278 / SZ) (Geobacter lovleyi).